We begin with the raw amino-acid sequence, 617 residues long: mRNA export factor MEX67 (617 aa).

Residues 1-10 (MSYRGRGGGY) show a composition bias toward gly residues. Positions 1-24 (MSYRGRGGGYNNNRGQFSSGPHQH) are disordered. LRR repeat units follow at residues 185–206 (DVDS…TSMA), 211–232 (KLQN…ETWR), and 237–258 (FLRE…AEIQ). Positions 309-499 (LATNFIANYL…MIVASDTLLI (191 aa)) constitute an NTF2 domain. Disordered stretches follow at residues 442 to 469 (EVDG…HKRI) and 513 to 554 (LPSN…TTAD). Low complexity-rich tracts occupy residues 445–459 (GSAS…GGSR) and 526–542 (ATST…TTPQ). Positions 565–617 (QIQQELLVKILLETKLNINYGIMLCEQSNWDYQQASVNFKNSAASLPSDAFVQ) constitute a TAP-C domain.

This sequence belongs to the NXF family. In terms of assembly, interacts with nucleoporin complex protein MTR2.

The protein localises to the nucleus. It localises to the cytoplasm. In terms of biological role, involved in the export of mRNA from the nucleus to the cytoplasm. The protein is mRNA export factor MEX67 of Candida albicans (strain SC5314 / ATCC MYA-2876) (Yeast).